The following is a 263-amino-acid chain: Small ribosomal subunit protein eS4 (263 aa).

The S4 RNA-binding domain occupies 42–104 (LPLIIFLRNR…TGENFRLIYD (63 aa)).

It belongs to the eukaryotic ribosomal protein eS4 family.

This chain is Small ribosomal subunit protein eS4 (RPS4), found in Cricetulus griseus (Chinese hamster).